A 519-amino-acid polypeptide reads, in one-letter code: Glucose-1-phosphate adenylyltransferase large subunit 2, chloroplastic/amyloplastic (519 aa).

This sequence belongs to the bacterial/plant glucose-1-phosphate adenylyltransferase family. In terms of assembly, heterotetramer. In terms of tissue distribution, leaves and tubers.

Its subcellular location is the plastid. The protein localises to the chloroplast. The protein resides in the amyloplast. It catalyses the reaction alpha-D-glucose 1-phosphate + ATP + H(+) = ADP-alpha-D-glucose + diphosphate. It participates in glycan biosynthesis; starch biosynthesis. Activated by 3'phosphoglycerate, inhibited by orthophosphate. Allosteric regulation. In terms of biological role, this protein plays a role in synthesis of starch. It catalyzes the synthesis of the activated glycosyl donor, ADP-glucose from Glc-1-P and ATP. The protein is Glucose-1-phosphate adenylyltransferase large subunit 2, chloroplastic/amyloplastic (AGPS2) of Solanum tuberosum (Potato).